The chain runs to 1196 residues: Major DNA-binding protein (1196 aa).

A zinc finger lies at 499–512 (CNLCTFETRHACAH). 2 short sequence motifs (required for filament formation) span residues 843 to 844 (FW) and 1142 to 1144 (FNF). The tract at residues 1171 to 1196 (RKRAFHGDDPFGEGPPEKKDLTLDML) is required for nuclear localization. Residues 1176 to 1196 (HGDDPFGEGPPEKKDLTLDML) are disordered.

The protein belongs to the herpesviridae major DNA-binding protein family. In terms of assembly, homooligomers. Forms double-helical filaments necessary for the formation of replication compartments within the host nucleus. Interacts with the origin-binding protein. Interacts with the helicase primase complex; this interaction stimulates primer synthesis activity of the helicase-primase complex. Interacts with the DNA polymerase. Interacts with the alkaline exonuclease; this interaction increases its nuclease processivity.

The protein localises to the host nucleus. Plays several crucial roles in viral infection. Participates in the opening of the viral DNA origin to initiate replication by interacting with the origin-binding protein. May disrupt loops, hairpins and other secondary structures present on ssDNA to reduce and eliminate pausing of viral DNA polymerase at specific sites during elongation. Promotes viral DNA recombination by performing strand-transfer, characterized by the ability to transfer a DNA strand from a linear duplex to a complementary single-stranded DNA circle. Can also catalyze the renaturation of complementary single strands. Additionally, reorganizes the host cell nucleus, leading to the formation of prereplicative sites and replication compartments. This process is driven by the protein which can form double-helical filaments in the absence of DNA. The protein is Major DNA-binding protein of Human herpesvirus 2 (strain HG52) (HHV-2).